We begin with the raw amino-acid sequence, 214 residues long: MFKKFLIFIVPILFLSACATKQDTFAQVNQISKNSQCSSCESPGGFEAKIKGLLYISDVGIQCCANKRTLDTGIALKKVYLHRFYDLKEGQKVLNAKGKKLFVDVNFNAVFYTYLKQELEARGIVVLDNNDQNSPYVSKIDLEFISYGATQDAIGLHSKLVGVLQVSDINKNKKFTIRTKQDVQGFDDLKETTFYTHLLIKQMANKAASLISEL.

Positions 1-17 (MFKKFLIFIVPILFLSA) are cleaved as a signal peptide. Cys-18 is lipidated: N-palmitoyl cysteine. Cys-18 carries the S-diacylglycerol cysteine lipid modification.

The protein localises to the cell outer membrane. The polypeptide is Outer membrane lipoprotein MapA (mapA) (Campylobacter jejuni subsp. jejuni serotype O:6 (strain 81116 / NCTC 11828)).